The following is a 377-amino-acid chain: Flap endonuclease 1 (377 aa).

The tract at residues 1 to 104 (MGIQGLAKLL…GELAKRTERR (104 aa)) is N-domain. Residue D34 coordinates Mg(2+). The DNA site is built by R47 and R70. Residues D86, E158, E160, D179, and D181 each coordinate Mg(2+). Positions 122-253 (NIDKFSRRLV…KRSVDLIRQH (132 aa)) are I-domain. A DNA-binding site is contributed by E158. Residues G231 and D233 each coordinate DNA. D233 provides a ligand contact to Mg(2+). The tract at residues 336-344 (TQGRLDSFF) is interaction with PCNA. The segment at 337–377 (QGRLDSFFKVLPSPANKRKLQDGKGSQNKKAKTGGKFKRPK) is disordered. A compositionally biased stretch (basic residues) spans 363-377 (QNKKAKTGGKFKRPK).

It belongs to the XPG/RAD2 endonuclease family. FEN1 subfamily. As to quaternary structure, interacts with PCNA. Three molecules of FEN1 bind to one PCNA trimer with each molecule binding to one PCNA monomer. PCNA stimulates the nuclease activity without altering cleavage specificity. Requires Mg(2+) as cofactor. Phosphorylated. Phosphorylation upon DNA damage induces relocalization to the nuclear plasma.

It localises to the nucleus. The protein resides in the nucleolus. It is found in the nucleoplasm. Its subcellular location is the mitochondrion. Structure-specific nuclease with 5'-flap endonuclease and 5'-3' exonuclease activities involved in DNA replication and repair. During DNA replication, cleaves the 5'-overhanging flap structure that is generated by displacement synthesis when DNA polymerase encounters the 5'-end of a downstream Okazaki fragment. It enters the flap from the 5'-end and then tracks to cleave the flap base, leaving a nick for ligation. Also involved in the long patch base excision repair (LP-BER) pathway, by cleaving within the apurinic/apyrimidinic (AP) site-terminated flap. Acts as a genome stabilization factor that prevents flaps from equilibrating into structures that lead to duplications and deletions. Also possesses 5'-3' exonuclease activity on nicked or gapped double-stranded DNA, and exhibits RNase H activity. Also involved in replication and repair of rDNA and in repairing mitochondrial DNA. The sequence is that of Flap endonuclease 1 from Nematostella vectensis (Starlet sea anemone).